The chain runs to 163 residues: Photosystem II extrinsic protein V (163 aa).

A signal peptide spans 1-26 (MFRRLIGVVVATVLLSFQLLVGSATA). Positions 63, 66, 67, and 118 each coordinate heme c.

The protein belongs to the cytochrome c family. PsbV subfamily. PSII is composed of 1 copy each of membrane proteins PsbA, PsbB, PsbC, PsbD, PsbE, PsbF, PsbH, PsbI, PsbJ, PsbK, PsbL, PsbM, PsbT, PsbX, PsbY, PsbZ, Psb30/Ycf12, peripheral proteins PsbO, CyanoQ (PsbQ), PsbU, PsbV and a large number of cofactors. It forms dimeric complexes. Requires heme c as cofactor.

The protein localises to the cellular thylakoid membrane. One of the extrinsic, lumenal subunits of photosystem II (PSII). PSII is a light-driven water plastoquinone oxidoreductase, using light energy to abstract electrons from H(2)O, generating a proton gradient subsequently used for ATP formation. The extrinsic proteins stabilize the structure of photosystem II oxygen-evolving complex (OEC), the ion environment of oxygen evolution and protect the OEC against heat-induced inactivation. Low-potential cytochrome c that plays a role in the OEC of PSII. The sequence is that of Photosystem II extrinsic protein V from Nostoc punctiforme (strain ATCC 29133 / PCC 73102).